The sequence spans 351 residues: Probable cell division control protein 7 homolog 2 (351 aa).

One can recognise a Protein kinase domain in the interval 21–341 (YTPIEKIGEG…ASDALSHPFF (321 aa)). Residues 27 to 35 (IGEGSFSVV) and K50 each bind ATP. D137 functions as the Proton acceptor in the catalytic mechanism.

It belongs to the protein kinase superfamily. Ser/Thr protein kinase family. CDC7 subfamily. The cofactor is Mg(2+).

It carries out the reaction L-seryl-[protein] + ATP = O-phospho-L-seryl-[protein] + ADP + H(+). The catalysed reaction is L-threonyl-[protein] + ATP = O-phospho-L-threonyl-[protein] + ADP + H(+). In terms of biological role, serine/threonine-protein kinase. Needed for the initiation of DNA synthesis during mitosis as well as for synaptonemal complex formation and commitment to recombination during meiosis. This chain is Probable cell division control protein 7 homolog 2 (CDC7-2), found in Encephalitozoon cuniculi (strain GB-M1) (Microsporidian parasite).